An 843-amino-acid polypeptide reads, in one-letter code: Protein P (843 aa).

Residues 1 to 177 (MPLSYQHFRK…FCGSPYSWEQ (177 aa)) form a terminal protein domain (TP) region. Residues 178-346 (DLQHGRLVIQ…YCLCHIVNLI (169 aa)) are spacer. Disordered stretches follow at residues 219–258 (RKSR…VGVE) and 297–316 (SSGH…RSQS). The interval 347–690 (DDWGPCAEHG…YLNLYPVARQ (344 aa)) is polymerase/reverse transcriptase domain (RT). Residues 357–600 (EHRIRTPRTP…YSLNFMGYVI (244 aa)) form the Reverse transcriptase domain. Residues aspartate 429, aspartate 551, and aspartate 552 each coordinate Mg(2+).

The protein belongs to the hepadnaviridae P protein family.

It catalyses the reaction DNA(n) + a 2'-deoxyribonucleoside 5'-triphosphate = DNA(n+1) + diphosphate. The enzyme catalyses Endonucleolytic cleavage to 5'-phosphomonoester.. With respect to regulation, activated by host HSP70 and HSP40 in vitro to be able to bind the epsilon loop of the pgRNA. Because deletion of the RNase H region renders the protein partly chaperone-independent, the chaperones may be needed indirectly to relieve occlusion of the RNA-binding site by this domain. Inhibited by several reverse-transcriptase inhibitors: Lamivudine, Adefovir and Entecavir. Functionally, multifunctional enzyme that converts the viral RNA genome into dsDNA in viral cytoplasmic capsids. This enzyme displays a DNA polymerase activity that can copy either DNA or RNA templates, and a ribonuclease H (RNase H) activity that cleaves the RNA strand of RNA-DNA heteroduplexes in a partially processive 3'- to 5'-endonucleasic mode. Neo-synthesized pregenomic RNA (pgRNA) are encapsidated together with the P protein, and reverse-transcribed inside the nucleocapsid. Initiation of reverse-transcription occurs first by binding the epsilon loop on the pgRNA genome, and is initiated by protein priming, thereby the 5'-end of (-)DNA is covalently linked to P protein. Partial (+)DNA is synthesized from the (-)DNA template and generates the relaxed circular DNA (RC-DNA) genome. After budding and infection, the RC-DNA migrates in the nucleus, and is converted into a plasmid-like covalently closed circular DNA (cccDNA). The activity of P protein does not seem to be necessary for cccDNA generation, and is presumably released from (+)DNA by host nuclear DNA repair machinery. The protein is Protein P of Hepatitis B virus genotype B1 (isolate Japan/Ry30/2002) (HBV-B).